Here is a 134-residue protein sequence, read N- to C-terminus: Small ribosomal subunit protein uS11 (134 aa).

Disordered regions lie at residues 1-24 (MPPK…VAHG) and 115-134 (IQDV…RRRV). Positions 9-18 (AVKKVRRKEK) are enriched in basic residues.

The protein belongs to the universal ribosomal protein uS11 family. Part of the 30S ribosomal subunit. Interacts with proteins S7 and S18. Binds to IF-3.

Located on the platform of the 30S subunit, it bridges several disparate RNA helices of the 16S rRNA. Forms part of the Shine-Dalgarno cleft in the 70S ribosome. The polypeptide is Small ribosomal subunit protein uS11 (Saccharopolyspora erythraea (strain ATCC 11635 / DSM 40517 / JCM 4748 / NBRC 13426 / NCIMB 8594 / NRRL 2338)).